Consider the following 175-residue polypeptide: Alpha-crystallin B chain (175 aa).

Residue M1 is modified to N-acetylmethionine. 3 positions are modified to phosphoserine: S19, S45, and S59. Residues 56–164 enclose the sHSP domain; that stretch reads RAPSWIDTGL…PERTIPITRE (109 aa). H83 contributes to the Zn(2+) binding site. K92 carries the N6-acetyllysine modification. Zn(2+)-binding residues include H104, E106, H111, and H119. Residues 142–175 are disordered; the sequence is VLTVNGPRKQASGPERTIPITREEKPAVTAAPKK. K166 is subject to N6-acetyllysine. T170 is a glycosylation site (O-linked (GlcNAc) threonine).

Belongs to the small heat shock protein (HSP20) family. In terms of assembly, heteromer composed of three CRYAA and one CRYAB subunits. Aggregates with homologous proteins, including the small heat shock protein HSPB1, to form large heteromeric complexes. Inter-subunit bridging via zinc ions enhances stability, which is crucial as there is no protein turn over in the lens. Interacts with HSPBAP1. Interacts with TTN/titin. Interacts with TMEM109; in the cellular response to DNA damage. Interacts with DES; binds rapidly during early stages of DES filament assembly and a reduced binding seen in the later stages. Interacts with TMED10; the interaction mediates the translocation from the cytoplasm into the ERGIC (endoplasmic reticulum-Golgi intermediate compartment) and thereby secretion. Interacts with ATP6V1A and with MTOR, forming a ternary complex. In terms of tissue distribution, lens as well as other tissues.

Its subcellular location is the cytoplasm. The protein localises to the nucleus. It is found in the secreted. The protein resides in the lysosome. Functionally, may contribute to the transparency and refractive index of the lens. Has chaperone-like activity, preventing aggregation of various proteins under a wide range of stress conditions. In lens epithelial cells, stabilizes the ATP6V1A protein, preventing its degradation by the proteasome. The chain is Alpha-crystallin B chain from Rattus norvegicus (Rat).